A 518-amino-acid chain; its full sequence is Major facilitator superfamily multidrug transporter mfsC (518 aa).

7 helical membrane passes run 27-47, 65-85, 88-108, 123-143, 152-172, 183-203, and 212-232; these read VLLTTTVVNFLDLFQLSSVLF, WVLIVYNITFAAFLLIAGQLG, FGLEKIFIAGTATLTISNVIN, ISGVGAGLTAPNGLAILSNTF, ALAIYTACGPLGSTIGTVVGS, IFWLCLILTGLSTILACLFLP, and PIDIPGTVVFTAGVALLVYGL. Residue asparagine 233 is glycosylated (N-linked (GlcNAc...) asparagine). The next 7 helical transmembrane spans lie at 242–262, 281–301, 315–335, 347–367, 380–400, 409–429, and 455–475; these read SAAMLTGIILGVCLLFVFLWV, FLVMLVAIFAFGGSFSTWFFI, ILTAVYFLPAAFAAIASGVFA, ILVAGLAITAAGAVAWAFAGP, TAIIFVIGSPVALVPTQSILL, AVAGALFNTAYQVGASVILAG, and AFWLIAGVLGAAALTVMVCYW.

It belongs to the major facilitator superfamily. EmrB family.

It localises to the membrane. In terms of biological role, major facilitator superfamily transporter that may be involved in A.fumigatus adaptation to azoles such as vorizonazole. The chain is Major facilitator superfamily multidrug transporter mfsC from Aspergillus fumigatus (strain ATCC MYA-4609 / CBS 101355 / FGSC A1100 / Af293) (Neosartorya fumigata).